The sequence spans 577 residues: Pentatricopeptide repeat-containing protein At1g63400 (577 aa).

PPR repeat units follow at residues glycine 49 to proline 83, serine 84 to histidine 118, asparagine 119 to proline 153, serine 154 to proline 188, aspartate 189 to proline 223, asparagine 224 to alanine 258, asparagine 259 to proline 293, asparagine 294 to proline 328, asparagine 329 to proline 363, aspartate 364 to proline 398, asparagine 399 to glycine 433, asparagine 434 to proline 468, asparagine 469 to proline 503, threonine 504 to proline 538, and aspartate 539 to proline 573.

This sequence belongs to the PPR family. P subfamily.

The sequence is that of Pentatricopeptide repeat-containing protein At1g63400 from Arabidopsis thaliana (Mouse-ear cress).